Reading from the N-terminus, the 360-residue chain is Glycerol-3-phosphate dehydrogenase [NAD(+)], cytoplasmic (360 aa).

Residues 11–16 (GSGNWG), Phe98, Lys121, and Ala155 contribute to the NAD(+) site. Lys121 serves as a coordination point for substrate. The active-site Proton acceptor is the Lys206. The NAD(+) site is built by Arg270 and Gln299. Substrate is bound at residue 270 to 271 (RN).

The protein belongs to the NAD-dependent glycerol-3-phosphate dehydrogenase family. As to quaternary structure, homodimer.

The protein localises to the cytoplasm. It catalyses the reaction sn-glycerol 3-phosphate + NAD(+) = dihydroxyacetone phosphate + NADH + H(+). The protein operates within phospholipid metabolism; alpha-glycerophosphate cycle. This chain is Glycerol-3-phosphate dehydrogenase [NAD(+)], cytoplasmic (Gpdh1), found in Drosophila kanekoi (Fruit fly).